The sequence spans 397 residues: S-adenosylmethionine synthase (397 aa).

His17 is a binding site for ATP. Residue Asp19 participates in Mg(2+) binding. Glu45 serves as a coordination point for K(+). L-methionine is bound by residues Glu58 and Gln101. The tract at residues 101–111 is flexible loop; the sequence is QSPDIAQGVDK. Residues 176–178, 243–244, Asp252, 258–259, and Lys279 each bind ATP; these read DGK, RF, and RK. Residue Asp252 participates in L-methionine binding. Lys283 contacts L-methionine.

It belongs to the AdoMet synthase family. Homotetramer; dimer of dimers. It depends on Mg(2+) as a cofactor. K(+) serves as cofactor.

The protein resides in the cytoplasm. The catalysed reaction is L-methionine + ATP + H2O = S-adenosyl-L-methionine + phosphate + diphosphate. It participates in amino-acid biosynthesis; S-adenosyl-L-methionine biosynthesis; S-adenosyl-L-methionine from L-methionine: step 1/1. Functionally, catalyzes the formation of S-adenosylmethionine (AdoMet) from methionine and ATP. The overall synthetic reaction is composed of two sequential steps, AdoMet formation and the subsequent tripolyphosphate hydrolysis which occurs prior to release of AdoMet from the enzyme. This chain is S-adenosylmethionine synthase, found in Staphylococcus aureus (strain MRSA252).